Here is a 90-residue protein sequence, read N- to C-terminus: Probable Fe(2+)-trafficking protein (90 aa).

The protein belongs to the Fe(2+)-trafficking protein family.

Could be a mediator in iron transactions between iron acquisition and iron-requiring processes, such as synthesis and/or repair of Fe-S clusters in biosynthetic enzymes. The sequence is that of Probable Fe(2+)-trafficking protein from Variovorax paradoxus (strain S110).